The sequence spans 617 residues: Proline--tRNA ligase (617 aa).

This sequence belongs to the class-II aminoacyl-tRNA synthetase family. ProS type 1 subfamily. As to quaternary structure, homodimer.

It is found in the cytoplasm. It catalyses the reaction tRNA(Pro) + L-proline + ATP = L-prolyl-tRNA(Pro) + AMP + diphosphate. Functionally, catalyzes the attachment of proline to tRNA(Pro) in a two-step reaction: proline is first activated by ATP to form Pro-AMP and then transferred to the acceptor end of tRNA(Pro). As ProRS can inadvertently accommodate and process non-cognate amino acids such as alanine and cysteine, to avoid such errors it has two additional distinct editing activities against alanine. One activity is designated as 'pretransfer' editing and involves the tRNA(Pro)-independent hydrolysis of activated Ala-AMP. The other activity is designated 'posttransfer' editing and involves deacylation of mischarged Ala-tRNA(Pro). The misacylated Cys-tRNA(Pro) is not edited by ProRS. This is Proline--tRNA ligase from Treponema pallidum (strain Nichols).